Consider the following 815-residue polypeptide: Dual specificity tyrosine-phosphorylation-regulated kinase mbk-2 (815 aa).

Disordered regions lie at residues 1–49 (MAAL…NYTR), 67–146 (PSSF…PLGT), 185–204 (YEFP…SQQH), and 298–395 (ALPS…FRPE). Composition is skewed to polar residues over residues 7–25 (FTRN…TQQG) and 40–49 (SKMSNINYTR). Low complexity predominate over residues 68 to 78 (SSFSGASSSSS). Polar residues-rich tracts occupy residues 119 to 140 (SGNT…TSNL) and 190 to 204 (GQAQ…SQQH). A compositionally biased stretch (low complexity) spans 301-316 (SVGTSSSNGSSNSSSG). Polar residues predominate over residues 325-351 (LMTQSIGGPNKHLSASHSTLNTASTHD). S361 carries the phosphoserine; by cdk-1 modification. Residues 363-391 (SNESLSRSHTSSSGGSQGGHNSNSGSNSG) are compositionally biased toward low complexity. Positions 460 to 773 (YEVLKVIGKG…PAQALKHKWL (314 aa)) constitute a Protein kinase domain. Residues 466–474 (IGKGSFGQV) and K489 each bind ATP. Residue D586 is the Proton acceptor of the active site. Y620 is subject to Phosphotyrosine; by autocatalysis.

Belongs to the protein kinase superfamily. CMGC Ser/Thr protein kinase family. MNB/DYRK subfamily. In terms of assembly, part of a complex, consisting of pseudophosphatases egg-3, egg-4, egg-5 and kinase mbk-2. Interacts (via Tyr-618 and Tyr-620) with egg-4 (via tyrosine-protein phosphatase domain) and egg-5 (via tyrosine-protein phosphatase domain); mbk-2 tyrosine phosphorylation enhances the interaction. The interaction inhibits mbk-2 kinase activity and is required for mbk-2 oocyte cortex localization. Interacts (via N-terminus) with egg-3 (via tyrosine-protein phosphatase domain); the interaction does not affect mbk-2 kinase activity, is enhanced by mbk-2 tyrosine phosphorylation status and requires prior binding of mbk-2 to egg-4 and egg-5. Mg(2+) is required as a cofactor. Post-translationally, autophosphorylated.

Its subcellular location is the cytoplasm. It is found in the cell cortex. The catalysed reaction is L-seryl-[protein] + ATP = O-phospho-L-seryl-[protein] + ADP + H(+). The enzyme catalyses L-threonyl-[protein] + ATP = O-phospho-L-threonyl-[protein] + ADP + H(+). It carries out the reaction L-tyrosyl-[protein] + ATP = O-phospho-L-tyrosyl-[protein] + ADP + H(+). Its activity is regulated as follows. Activated during oocyte maturation by phosphorylation on Ser-361 by cdk-1. The pseudotyrosine phosphatases egg-4 and egg-5 sequester activated mbk-2 until the meiotic divisions and inhibit mbk-2 kinase activity directly, using a mixed-inhibition mechanism that does not involve tyrosine dephosphorylation. Its function is as follows. Required for oocyte-to-zygote transition in which it phosphorylates oocyte proteins, including mei-1, oma-1, oma-2, mex-5, and mex-6, modifying their activity and/or stability following meiosis. Through phosphorylation of P granule components including meg-1, promotes the disassembly of zygotic P granules in the anterior cytoplasm during zygote polarization, and thus plays a role in P granule distribution and segregation in early stage embryos following meiosis. Functions in both spindle positioning and in the posterior localization of cytoplasmic determinants, including pie-1, pos-1, and pgl-1, in early embryos. Involved in the asymmetric distribution of plk-1 at the 2-cell embryonic stage. The protein is Dual specificity tyrosine-phosphorylation-regulated kinase mbk-2 of Caenorhabditis briggsae.